The following is a 388-amino-acid chain: STE20-related kinase adapter protein strd-1 (388 aa).

The Protein kinase domain occupies 52–335 (YDCVRYMGTC…ASDLKSSAWL (284 aa)). ATP-binding positions include 58-66 (MGTCNGGQI) and Lys-82.

Belongs to the protein kinase superfamily. STE Ser/Thr protein kinase family. STE20 subfamily. As to quaternary structure, interacts with sad-1. Interacts with par-4. Expressed in nervous system, pharynx and excretory canal. Expressed in germline.

Its subcellular location is the perikaryon. The protein localises to the nucleus. It localises to the cell projection. It is found in the dendrite. The protein resides in the axon. Its subcellular location is the synapse. The protein localises to the cytoplasm. It localises to the cell cortex. Functionally, pseudokinase which may act as an adapter for kinases sad-1 and par-4 and thereby is involved in several developmental processes. Regulates cell-autonomously both neuronal polarity and synaptic organization when bound to sad-1. Required for sad-1 localization to synapses. Required to establish germline stem cell (GSC) quiescence during dauer development, to promote cell shedding during embryogenesis and to control asymmetric cell division of the Q.p neuroblast lineage, probably when bound to par-4. May be involved in maintaining the integrity of the early embryonic cortex when bound to par-4. In Caenorhabditis elegans, this protein is STE20-related kinase adapter protein strd-1.